Consider the following 445-residue polypeptide: Trigger factor (445 aa).

Positions 162 to 247 (GDQVTIDAIG…IKAVHTAEPT (86 aa)) constitute a PPIase FKBP-type domain.

Belongs to the FKBP-type PPIase family. Tig subfamily.

It is found in the cytoplasm. The catalysed reaction is [protein]-peptidylproline (omega=180) = [protein]-peptidylproline (omega=0). Its function is as follows. Involved in protein export. Acts as a chaperone by maintaining the newly synthesized protein in an open conformation. Functions as a peptidyl-prolyl cis-trans isomerase. The polypeptide is Trigger factor (Rickettsia akari (strain Hartford)).